The primary structure comprises 689 residues: Glycine--tRNA ligase beta subunit (689 aa).

It belongs to the class-II aminoacyl-tRNA synthetase family. As to quaternary structure, tetramer of two alpha and two beta subunits.

The protein resides in the cytoplasm. The catalysed reaction is tRNA(Gly) + glycine + ATP = glycyl-tRNA(Gly) + AMP + diphosphate. This is Glycine--tRNA ligase beta subunit from Actinobacillus pleuropneumoniae serotype 3 (strain JL03).